The following is a 200-amino-acid chain: Ciliary microtubule inner protein 2C (200 aa).

Belongs to the CIMIP2 family. In terms of assembly, microtubule inner protein component of sperm flagellar doublet microtubules.

Its subcellular location is the cytoplasm. It is found in the cytoskeleton. The protein localises to the cilium axoneme. It localises to the flagellum axoneme. Its function is as follows. Microtubule inner protein (MIP) part of the dynein-decorated doublet microtubules (DMTs) in cilia axoneme, which is required for motile cilia beating. Binds to the intra-tubulin interfaces. The sequence is that of Ciliary microtubule inner protein 2C (Cimip2c) from Mus musculus (Mouse).